Consider the following 226-residue polypeptide: V-type proton ATPase subunit E (226 aa).

The protein belongs to the V-ATPase E subunit family. V-ATPase is a heteromultimeric enzyme made up of two complexes: the ATP-hydrolytic V1 complex and the proton translocation V0 complex. The V1 complex consists of three catalytic AB heterodimers that form a heterohexamer, three peripheral stalks each consisting of EG heterodimers, one central rotor including subunits D and F, and the regulatory subunits C and H. The proton translocation complex V0 consists of the proton transport subunit a, a ring of proteolipid subunits c9c'', rotary subunit d, subunits e and f, and the accessory subunits VhaAC45 and ATP6AP2.

Subunit of the V1 complex of vacuolar(H+)-ATPase (V-ATPase), a multisubunit enzyme composed of a peripheral complex (V1) that hydrolyzes ATP and a membrane integral complex (V0) that translocates protons. V-ATPase is responsible for acidifying and maintaining the pH of intracellular compartments and in some cell types, is targeted to the plasma membrane, where it is responsible for acidifying the extracellular environment. The sequence is that of V-type proton ATPase subunit E (VHA26) from Manduca sexta (Tobacco hawkmoth).